Here is a 187-residue protein sequence, read N- to C-terminus: uncharacterized protein (187 aa).

Residues 6 to 66 form the HTH tetR-type domain; it reads TDLAEQIFSA…QFAHRVFSMF (61 aa). Positions 29-48 form a DNA-binding region, H-T-H motif; the sequence is SMLKLAKEANVAAGTIYLYF.

This is an uncharacterized protein from Haemophilus influenzae (strain ATCC 51907 / DSM 11121 / KW20 / Rd).